A 343-amino-acid polypeptide reads, in one-letter code: MKQYSVGNQHSNYRSLLFPFLCSQMTQLTASGNQTMVTEFLFSMFPHAHRGGLLFFIPLLLIYGFILTGNLIMFIVIQVGMALHTPLYFFISVLSFLEICYTTTTIPKMLSCLISEQKSISVAGCLLQMYFFHSLGITESCVLTAMAIDRYIAICNPLRYPTIMIPKLCIQLTVGSCFCGFLLVLPEIAWISTLPFCGSNQIHQIFCDFTPVLSLACTDTFLVVIVDAIHAAEIVASFLVIALSYIRIIIVILGMHSAEGHHKAFSTCAAHLAVFLLFFGSVAVMYLRFSATYSVFWDTAIAVTFVILAPFFNPIIYSLKNKDMKEAIGRLFHYQKRAGWAGK.

Over 1 to 53 the chain is Extracellular; sequence MKQYSVGNQHSNYRSLLFPFLCSQMTQLTASGNQTMVTEFLFSMFPHAHRGGL. Asparagine 33 carries N-linked (GlcNAc...) asparagine glycosylation. The helical transmembrane segment at 54–74 threads the bilayer; that stretch reads LFFIPLLLIYGFILTGNLIMF. Topologically, residues 75–82 are cytoplasmic; it reads IVIQVGMA. Residues 83–103 traverse the membrane as a helical segment; it reads LHTPLYFFISVLSFLEICYTT. The Extracellular segment spans residues 104–127; it reads TTIPKMLSCLISEQKSISVAGCLL. An intrachain disulfide couples cysteine 125 to cysteine 217. The helical transmembrane segment at 128 to 148 threads the bilayer; it reads QMYFFHSLGITESCVLTAMAI. Topologically, residues 149–167 are cytoplasmic; it reads DRYIAICNPLRYPTIMIPK. Residues 168-188 form a helical membrane-spanning segment; sequence LCIQLTVGSCFCGFLLVLPEI. The Extracellular portion of the chain corresponds to 189–224; it reads AWISTLPFCGSNQIHQIFCDFTPVLSLACTDTFLVV. Residues 225 to 244 form a helical membrane-spanning segment; the sequence is IVDAIHAAEIVASFLVIALS. The Cytoplasmic segment spans residues 245-264; that stretch reads YIRIIIVILGMHSAEGHHKA. A helical transmembrane segment spans residues 265 to 285; sequence FSTCAAHLAVFLLFFGSVAVM. The Extracellular portion of the chain corresponds to 286–298; sequence YLRFSATYSVFWD. The helical transmembrane segment at 299-319 threads the bilayer; that stretch reads TAIAVTFVILAPFFNPIIYSL. At 320 to 343 the chain is on the cytoplasmic side; sequence KNKDMKEAIGRLFHYQKRAGWAGK.

Belongs to the G-protein coupled receptor 1 family.

It is found in the cell membrane. Odorant receptor. This Homo sapiens (Human) protein is Olfactory receptor 6K6 (OR6K6).